Reading from the N-terminus, the 434-residue chain is Putative D-alanyl-D-alanine carboxypeptidase (434 aa).

A helical; Signal-anchor transmembrane segment spans residues Tyr-7 to Leu-25.

It belongs to the peptidase S12 family. YfeW subfamily.

The protein localises to the cell inner membrane. It carries out the reaction Preferential cleavage: (Ac)2-L-Lys-D-Ala-|-D-Ala. Also transpeptidation of peptidyl-alanyl moieties that are N-acyl substituents of D-alanine.. This chain is Putative D-alanyl-D-alanine carboxypeptidase, found in Escherichia coli O157:H7.